Reading from the N-terminus, the 615-residue chain is DNA mismatch repair protein MutL (615 aa).

Positions 363 to 397 (FAEPAAREPVAPRYTPAPASGSRPAAPWPNAQPGY) are disordered. Over residues 364–391 (AEPAAREPVAPRYTPAPASGSRPAAPWP) the composition is skewed to low complexity.

The protein belongs to the DNA mismatch repair MutL/HexB family.

This protein is involved in the repair of mismatches in DNA. It is required for dam-dependent methyl-directed DNA mismatch repair. May act as a 'molecular matchmaker', a protein that promotes the formation of a stable complex between two or more DNA-binding proteins in an ATP-dependent manner without itself being part of a final effector complex. In Shigella boydii serotype 4 (strain Sb227), this protein is DNA mismatch repair protein MutL.